A 337-amino-acid chain; its full sequence is Dihydroorotate dehydrogenase (quinone) (337 aa).

Residues 58 to 62 (AGLDK) and Thr82 each bind FMN. Residue Lys62 coordinates substrate. 107–111 (NCMGF) is a substrate binding site. FMN-binding residues include Asn137 and Asn170. Position 170 (Asn170) interacts with substrate. The active-site Nucleophile is Ser173. Asn175 serves as a coordination point for substrate. Lys215 and Thr243 together coordinate FMN. Substrate is bound at residue 244-245 (NT). FMN is bound by residues Gly266, Gly294, and 315–316 (YS).

This sequence belongs to the dihydroorotate dehydrogenase family. Type 2 subfamily. In terms of assembly, monomer. FMN is required as a cofactor.

It is found in the cell membrane. It catalyses the reaction (S)-dihydroorotate + a quinone = orotate + a quinol. It participates in pyrimidine metabolism; UMP biosynthesis via de novo pathway; orotate from (S)-dihydroorotate (quinone route): step 1/1. Its function is as follows. Catalyzes the conversion of dihydroorotate to orotate with quinone as electron acceptor. This is Dihydroorotate dehydrogenase (quinone) from Dichelobacter nodosus (strain VCS1703A).